The chain runs to 696 residues: Methionine synthase reductase (696 aa).

The region spanning 4–147 is the Flavodoxin-like domain; sequence FLLLYATQRG…VVEPWIDGLW (144 aa). FMN-binding positions include 10 to 14 and 93 to 124; these read TQRGQ and LLGLGDSEYTYFCNGGKVIDKRLQELGAQRFY. Residues 166-245 form a hinge region; the sequence is TLSRASDAPL…SSLSIPAVPP (80 aa). A phosphoserine mark is found at S171 and S188. Positions 269-531 constitute an FAD-binding FR-type domain; it reads DPSFQVPISK…PRATNAFHLP (263 aa). K289 contributes to the NADP(+) binding site. FAD is bound by residues 449-452 and 485-488; these read RPYS and GVCT. Residues 608-609, 622-624, and D657 contribute to the NADP(+) site; these read SR and YVQ. W695 lines the FAD pocket.

As to quaternary structure, forms a multiprotein complex with MMACHC, MMADHC and MTR. The cofactor is FAD. Requires FMN as cofactor.

The protein resides in the cytoplasm. It catalyses the reaction 2 methylcob(III)alamin-[methionine synthase] + 2 S-adenosyl-L-homocysteine + NADP(+) + H(+) = 2 cob(II)alamin-[methionine synthase] + 2 S-adenosyl-L-methionine + NADPH. It carries out the reaction 2 cob(II)alamin + A + 2 H2O + 2 H(+) = 2 aquacob(III)alamin + AH2. Key enzyme in methionine and folate homeostasis responsible for the reactivation of methionine synthase (MTR/MS) activity by catalyzing the reductive methylation of MTR-bound cob(II)alamin. Cobalamin (vitamin B12) forms a complex with MTR to serve as an intermediary in methyl transfer reactions that cycles between MTR-bound methylcob(III)alamin and MTR bound-cob(I)alamin forms, and occasional oxidative escape of the cob(I)alamin intermediate during the catalytic cycle leads to the inactive cob(II)alamin species. The processing of cobalamin in the cytosol occurs in a multiprotein complex composed of at least MMACHC, MMADHC, MTRR and MTR which may contribute to shuttle safely and efficiently cobalamin towards MTR in order to produce methionine. Also necessary for the utilization of methyl groups from the folate cycle, thereby affecting transgenerational epigenetic inheritance. Also acts as a molecular chaperone for methionine synthase by stabilizing apoMTR and incorporating methylcob(III)alamin into apoMTR to form the holoenzyme. Also serves as an aquacob(III)alamin reductase by reducing aquacob(III)alamin to cob(II)alamin; this reduction leads to stimulation of the conversion of apoMTR and aquacob(III)alamin to MTR holoenzyme. This Mus musculus (Mouse) protein is Methionine synthase reductase.